The chain runs to 797 residues: Protocadherin beta-9 (797 aa).

The first 26 residues, 1–26 (MKTRGFSFPRQRQVLFLFLFWGVSLA), serve as a signal peptide directing secretion. At 27 to 690 (GSGFGRYSVT…AQADLLTVYL (664 aa)) the chain is on the extracellular side. 5 Cadherin domains span residues 35-133 (VTEE…SPVF), 138-242 (MVLK…VPQF), 247-347 (YETQ…PPEL), 352-451 (LSNS…APAF), and 456-561 (YTLF…SPFV). Asparagine 169 is a glycosylation site (N-linked (GlcNAc...) asparagine). A glycan (N-linked (GlcNAc...) asparagine) is linked at asparagine 418. Asparagine 567 is a glycosylation site (N-linked (GlcNAc...) asparagine). The 104-residue stretch at 568 to 671 (GSAPCTELVP…LVDGFSQPYL (104 aa)) folds into the Cadherin 6 domain. The helical transmembrane segment at 691–711 (VVALASVSSLFLLSVLLFVAV) threads the bilayer. Topologically, residues 712–797 (RLCRRSRAAS…TLPNSFGFNY (86 aa)) are cytoplasmic. Positions 777-797 (HRGGKEIEENSTLPNSFGFNY) are disordered. Over residues 786-797 (NSTLPNSFGFNY) the composition is skewed to polar residues.

Its subcellular location is the cell membrane. Potential calcium-dependent cell-adhesion protein. May be involved in the establishment and maintenance of specific neuronal connections in the brain. The protein is Protocadherin beta-9 (PCDHB9) of Homo sapiens (Human).